The chain runs to 359 residues: ATP-dependent kinase YFH7 (359 aa).

31-39 (GPPGSGKST) is an ATP binding site.

Belongs to the YFH7 family.

ATP-dependent kinase that could be involved in endoplasmic reticulum membrane assembly. This is ATP-dependent kinase YFH7 (YFH7) from Vanderwaltozyma polyspora (strain ATCC 22028 / DSM 70294 / BCRC 21397 / CBS 2163 / NBRC 10782 / NRRL Y-8283 / UCD 57-17) (Kluyveromyces polysporus).